The chain runs to 504 residues: Cytochrome P450 71B7 (504 aa).

A helical transmembrane segment spans residues 1–21 (MSILLCFLCLLPVFLVSLSIL). Residue lysine 82 forms a Glycyl lysine isopeptide (Lys-Gly) (interchain with G-Cter in ubiquitin) linkage. Cysteine 446 contributes to the heme binding site.

It belongs to the cytochrome P450 family. It depends on heme as a cofactor. As to expression, highly expressed in rosette leaves. Also expressed in roots, leaves, flowers, and siliques.

The protein localises to the membrane. The sequence is that of Cytochrome P450 71B7 (CYP71B7) from Arabidopsis thaliana (Mouse-ear cress).